Reading from the N-terminus, the 478-residue chain is Major facilitator superfamily domain-containing protein 12 (478 aa).

M1 is modified (N-acetylmethionine). The Cytoplasmic segment spans residues 1 to 26 (MVPGSPAAGAGPAPRALSLAARLSYA). Residues 27–47 (VGHFLNDLCASMWFTYLLLYL) traverse the membrane as a helical segment. The Lumenal segment spans residues 48–56 (HSVRAYSSR). A helical transmembrane segment spans residues 57–77 (GAGLLLLLGQVADGLCTPLVG). Residues 78-97 (YEADRAAGRCARCGPRKAWH) lie on the Cytoplasmic side of the membrane. Residues 98 to 118 (LVGTVCVLLSFPFIFSPCLGC) traverse the membrane as a helical segment. The Lumenal portion of the chain corresponds to 119–124 (GAATPE). Residues 125 to 145 (WAALLYYGPFIVVFQFGWAAT) traverse the membrane as a helical segment. Residues 146–168 (QIAHLSLIPELVTSDHEKVELTA) are Cytoplasmic-facing. A helical transmembrane segment spans residues 169–189 (LRYAFTVVANITVFGAAWLLL). Residues 190-216 (RLQGSAREGPPDEAGDHLGVQDVPVFR) lie on the Lumenal side of the membrane. The helical transmembrane segment at 217–237 (TLSLCVVGVGAVFSLLFHLGT) threads the bilayer. The Cytoplasmic segment spans residues 238–277 (RERRRPPAQEPDERSPLLAPATARPLLLWKHWLREPSFYQ). The chain crosses the membrane as a helical span at residues 278–300 (VGLLYMSTRLIVNLSQTYIAMYL). At 301-308 (TYSLNLPK) the chain is on the lumenal side. The chain crosses the membrane as a helical span at residues 309–329 (KFIATIPLVMYVSGFCSSFLM). The Cytoplasmic segment spans residues 330–338 (KPVNKCIGR). The chain crosses the membrane as a helical span at residues 339–359 (NMTYFVGLLVILAFAAWVVLV). Topologically, residues 360-361 (DE) are lumenal. Residues 362-382 (LGMAVYVAAVLLGGGCATILV) traverse the membrane as a helical segment. Residues 383–400 (TSLAMTADLIGPHTHSGA) are Cytoplasmic-facing. The chain crosses the membrane as a helical span at residues 401 to 421 (FVYGAMSFSDKVANGLAVMVI). The Lumenal segment spans residues 422–436 (QSLHPCSLELCCRAC). Residues 437–457 (VGFYHWVMVAVTGGVGVAATL) form a helical membrane-spanning segment. The Cytoplasmic segment spans residues 458–478 (SLCSLLVWPIRLRSWDPGAQP).

It belongs to the major facilitator superfamily.

It is found in the melanosome membrane. Its subcellular location is the lysosome membrane. The catalysed reaction is L-cysteine(in) = L-cysteine(out). Functionally, transporter that mediates the import of cysteine into melanosomes, thereby regulating skin/hair pigmentation. In melanosomes, cysteine import is required both for normal levels of cystine, the oxidized dimer of cysteine, and provide cysteine for the production of the cysteinyldopas used in pheomelanin synthesis, thereby regulating skin/hair pigmentation. Also catalyzes import of cysteine into lysosomes in non-pigmented cells, regulating lysosomal cystine and cysteine storage, which is essnetial for redox homeostasis. This Equus caballus (Horse) protein is Major facilitator superfamily domain-containing protein 12.